The chain runs to 237 residues: V-type proton ATPase subunit E3 (237 aa).

Residue M1 is modified to N-acetylmethionine. Residues 9-67 adopt a coiled-coil conformation; that stretch reads QIQQMVRFIRQEAEEKANEISISSEEEFNIEKLQLVEAEKKKIRQEYEKKEKQVDVRKK.

Belongs to the V-ATPase E subunit family. In terms of assembly, V-ATPase is a heteromultimeric enzyme composed of a peripheral catalytic V1 complex (components A to H) attached to an integral membrane V0 proton pore complex (components: a, c, c'', d and e).

The protein localises to the vacuole membrane. In terms of biological role, subunit of the peripheral V1 complex of vacuolar ATPase essential for assembly or catalytic function. V-ATPase is responsible for acidifying a variety of intracellular compartments in eukaryotic cells. This chain is V-type proton ATPase subunit E3 (VHA-E3), found in Arabidopsis thaliana (Mouse-ear cress).